Here is a 409-residue protein sequence, read N- to C-terminus: uncharacterized protein (409 aa).

This is an uncharacterized protein from Mycoplasma genitalium (strain ATCC 33530 / DSM 19775 / NCTC 10195 / G37) (Mycoplasmoides genitalium).